Here is a 576-residue protein sequence, read N- to C-terminus: 5'-nucleotidase (576 aa).

The signal sequence occupies residues 1-28; the sequence is MRPAAATAPKWLLLALSALLPLWPTAKS. Zn(2+) is bound by residues Asp-38 and His-40. Cys-53 and Cys-59 form a disulfide bridge. Asn-55 is a glycosylation site (N-linked (GlcNAc...) asparagine). Zn(2+) is bound by residues Asp-87, Asn-119, His-222, and His-245. 3 N-linked (GlcNAc...) asparagine glycosylation sites follow: Asn-313, Asn-335, and Asn-349. Cystine bridges form between Cys-355–Cys-360 and Cys-367–Cys-389. Arg-356 is a binding site for AMP. IMP is bound at residue Arg-356. AMP-binding residues include Asn-392 and Arg-397. IMP-binding residues include Asn-392 and Arg-397. Asn-405 carries N-linked (GlcNAc...) asparagine glycosylation. Phe-419 contacts AMP. Phe-419 serves as a coordination point for IMP. Cys-478 and Cys-481 are joined by a disulfide. 2 residues coordinate AMP: Tyr-502 and Asp-508. 2 residues coordinate IMP: Tyr-502 and Asp-508. Residue Ser-551 is the site of GPI-anchor amidated serine attachment. Residues 552–576 constitute a propeptide, removed in mature form; the sequence is AASHYQGSFPLIILSFWAVILVLYQ.

The protein belongs to the 5'-nucleotidase family. Homodimer. Zn(2+) serves as cofactor. As to expression, expressed in the brain.

Its subcellular location is the cell membrane. It carries out the reaction a ribonucleoside 5'-phosphate + H2O = a ribonucleoside + phosphate. The enzyme catalyses a 2'-deoxyribonucleoside 5'-phosphate + H2O = a 2'-deoxyribonucleoside + phosphate. It catalyses the reaction dTMP + H2O = thymidine + phosphate. The catalysed reaction is CMP + H2O = cytidine + phosphate. It carries out the reaction IMP + H2O = inosine + phosphate. The enzyme catalyses AMP + H2O = adenosine + phosphate. It catalyses the reaction GMP + H2O = guanosine + phosphate. The catalysed reaction is UMP + H2O = uridine + phosphate. It carries out the reaction dAMP + H2O = 2'-deoxyadenosine + phosphate. The enzyme catalyses dCMP + H2O = 2'-deoxycytidine + phosphate. In terms of biological role, catalyzes the hydrolysis of nucleotide monophosphates, releasing inorganic phosphate and the corresponding nucleoside. AMP is the preferred substrate but can also hydrolyze CMP and GMP. Shows a preference for ribonucleotide monophosphates over their equivalent deoxyribose forms. Other substrates include IMP, UMP, dAMP, dCMP, dTMP, NAD and NMN. This is 5'-nucleotidase (Nt5e) from Rattus norvegicus (Rat).